A 204-amino-acid polypeptide reads, in one-letter code: Inositol diphosphatase DSP2 (204 aa).

The segment at 1–27 (MQLEISPRQRSQQQKEEEGEHQQRAGE) is disordered. Residues 13-27 (QQKEEEGEHQQRAGE) show a composition bias toward basic and acidic residues. Residues 51-203 (NFAEVNDGIF…SSLMHLTASQ (153 aa)) form the Tyrosine-protein phosphatase domain. A WPD loop important for active site topology region spans residues 107–119 (FGIDGSKELLVNI). Residues Asn-118, Ile-119, and Lys-123 each coordinate 1D-myo-inositol hexakisphosphate. The active-site Phosphocysteine intermediate is Cys-143.

The protein belongs to the protein-tyrosine phosphatase family. Atypical dual-specificity phosphatase Siw14-like subfamily. Expressed in roots and young panicles.

It localises to the cytoplasm. It is found in the nucleus. The enzyme catalyses 5-diphospho-1D-myo-inositol 1,2,3,4,6-pentakisphosphate + H2O = 1D-myo-inositol hexakisphosphate + phosphate + H(+). It catalyses the reaction 1,5-bis(diphospho)-1D-myo-inositol 2,3,4,6-tetrakisphosphate + H2O = 1-diphospho-1D-myo-inositol 2,3,4,5,6-pentakisphosphate + phosphate + 2 H(+). It carries out the reaction 3,5-bis(diphospho)-1D-myo-inositol 1,2,4,6-tetrakisphosphate + H2O = 3-diphospho-1D-myo-inositol 1,2,4,5,6-pentakisphosphate + phosphate + 2 H(+). The catalysed reaction is 6-diphospho-1D-myo-inositol pentakisphosphate + H2O = 1D-myo-inositol hexakisphosphate + phosphate + H(+). Cleaves the beta-phosphate at the 5-position of soluble inositol pyrophosphates. Has highest activity on 5-diphosphoinositol 1,2,3,4,6-pentakisphosphate (5-InsP(7)). Acts as a negative regulator of defense responses against the fungal pathogen Magnaporthe oryzae. This chain is Inositol diphosphatase DSP2, found in Oryza sativa subsp. japonica (Rice).